A 113-amino-acid polypeptide reads, in one-letter code: Large ribosomal subunit protein uL24 (113 aa).

Belongs to the universal ribosomal protein uL24 family. As to quaternary structure, part of the 50S ribosomal subunit.

One of two assembly initiator proteins, it binds directly to the 5'-end of the 23S rRNA, where it nucleates assembly of the 50S subunit. In terms of biological role, one of the proteins that surrounds the polypeptide exit tunnel on the outside of the subunit. In Chlamydia felis (strain Fe/C-56) (Chlamydophila felis), this protein is Large ribosomal subunit protein uL24.